A 315-amino-acid polypeptide reads, in one-letter code: MDARLIDGKQAAHECTARLATRVQALRAAVGTAPFLAAVLVGDDPASCTYVAAKQRALARAHLRGETHRLPAHASHAQVLELIARLNEDARVHGILIQLPLPAHLDAARVCRAVAPEKDVDGFHPLNCGALFLAQPGFVPCTPAGIVHLLRRAQVPLAGARVVIVGRSAIVGRPLAVLLASPGCDATVTLCHSHTRGLADICVQADILVAALGKARFIGAPFVRTGAVVIDVGIHHVPDATAPRGRRLCGDVDFDAVAHKVQAITPVPGGVGPMTIAMLLHNTLCAAEYAAGMIPPFRAALYADLDGRAAGDVPH.

Residues 166 to 168, Ser-193, and Ile-234 contribute to the NADP(+) site; that span reads GRS.

This sequence belongs to the tetrahydrofolate dehydrogenase/cyclohydrolase family. As to quaternary structure, homodimer.

It carries out the reaction (6R)-5,10-methylene-5,6,7,8-tetrahydrofolate + NADP(+) = (6R)-5,10-methenyltetrahydrofolate + NADPH. It catalyses the reaction (6R)-5,10-methenyltetrahydrofolate + H2O = (6R)-10-formyltetrahydrofolate + H(+). It participates in one-carbon metabolism; tetrahydrofolate interconversion. Catalyzes the oxidation of 5,10-methylenetetrahydrofolate to 5,10-methenyltetrahydrofolate and then the hydrolysis of 5,10-methenyltetrahydrofolate to 10-formyltetrahydrofolate. The sequence is that of Bifunctional protein FolD from Treponema pallidum (strain Nichols).